The chain runs to 205 residues: Urease accessory protein UreE (205 aa).

Residues 171-192 are compositionally biased toward basic and acidic residues; that stretch reads HHGHSHSHDHDHDHDHDHDHQH. The disordered stretch occupies residues 171–205; it reads HHGHSHSHDHDHDHDHDHDHQHGPCCSHGHHHGHR.

It belongs to the UreE family.

Its subcellular location is the cytoplasm. Its function is as follows. Involved in urease metallocenter assembly. Binds nickel. Probably functions as a nickel donor during metallocenter assembly. This Burkholderia pseudomallei (strain K96243) protein is Urease accessory protein UreE.